Reading from the N-terminus, the 285-residue chain is MSMNIGATAMSRSSQAYAVETCVPDAYHFSKAQSTGTRFIMMLTAVASGVFAGRVMHSTMSVEMALTGLFVVLAFVGGLLSTWSPCGYSSLSLLRPAGRYSLGAVTRWAPTFFTHAVGYAIGAVVLGGALGGISWLLFADVPLQYAVIGLATLAIGYGLHQFGFLKMPYPQRRAQVPHDARFRFRSSVIGLLYGFSLGMNYLTYVQTPMLYIVTGVALLSGGVKAGIAVIAVFNIGRCLPVAVNFLPVKDQSVQAWLARWQESAVEVDGFLLLAIASAALMLVML.

The next 7 membrane-spanning stretches (helical) occupy residues 39–59 (FIMMLTAVASGVFAGRVMHST), 60–80 (MSVEMALTGLFVVLAFVGGLL), 119–139 (YAIGAVVLGGALGGISWLLFA), 145–165 (YAVIGLATLAIGYGLHQFGFL), 188–208 (VIGLLYGFSLGMNYLTYVQTP), 212–232 (IVTGVALLSGGVKAGIAVIAV), and 265–285 (VEVDGFLLLAIASAALMLVML).

The protein resides in the cell membrane. It participates in one-carbon metabolism; methylamine degradation. The polypeptide is Methylamine utilization protein MauF (mauF) (Methylophilus methylotrophus (Bacterium W3A1)).